Consider the following 346-residue polypeptide: tRNA N6-adenosine threonylcarbamoyltransferase (346 aa).

2 residues coordinate Fe cation: H111 and H115. Residues 134-138 (LVSGG), D167, G180, and N279 contribute to the substrate site. D307 is a binding site for Fe cation.

This sequence belongs to the KAE1 / TsaD family. Requires Fe(2+) as cofactor.

It localises to the cytoplasm. The enzyme catalyses L-threonylcarbamoyladenylate + adenosine(37) in tRNA = N(6)-L-threonylcarbamoyladenosine(37) in tRNA + AMP + H(+). Its function is as follows. Required for the formation of a threonylcarbamoyl group on adenosine at position 37 (t(6)A37) in tRNAs that read codons beginning with adenine. Is involved in the transfer of the threonylcarbamoyl moiety of threonylcarbamoyl-AMP (TC-AMP) to the N6 group of A37, together with TsaE and TsaB. TsaD likely plays a direct catalytic role in this reaction. The protein is tRNA N6-adenosine threonylcarbamoyltransferase of Burkholderia ambifaria (strain MC40-6).